A 188-amino-acid polypeptide reads, in one-letter code: Mitochondrial import receptor subunit TOM20 homolog (188 aa).

The Mitochondrial intermembrane portion of the chain corresponds to 1–12 (MTDTLFGFNKSN). The helical transmembrane segment at 13–31 (VVLAAGVAGAAFLGYCIYF) threads the bilayer. Topologically, residues 32 to 188 (DHKRINAPDY…ELIDDTDDLE (157 aa)) are cytoplasmic. Disordered stretches follow at residues 48–67 (KRRA…PAGG) and 155–188 (ADEA…DDLE). Low complexity predominate over residues 58 to 67 (MAARRPPAGG).

This sequence belongs to the Tom20 family. As to quaternary structure, forms part of the preprotein translocase complex of the outer mitochondrial membrane (TOM complex).

It localises to the mitochondrion outer membrane. Central component of the receptor complex responsible for the recognition and translocation of cytosolically synthesized mitochondrial preproteins. Together with TOM22 functions as the transit peptide receptor at the surface of the mitochondrion outer membrane and facilitates the movement of preproteins into the translocation pore. In Caenorhabditis briggsae, this protein is Mitochondrial import receptor subunit TOM20 homolog (tomm-20).